The primary structure comprises 270 residues: Phospholysine phosphohistidine inorganic pyrophosphate phosphatase (270 aa).

Aspartate 19 and cysteine 21 together coordinate Mg(2+). Substrate-binding positions include 19–21, 56–57, and lysine 191; these read DMC and TN. Residue aspartate 216 participates in Mg(2+) binding.

The protein belongs to the HAD-like hydrolase superfamily. The cofactor is Mg(2+).

The protein localises to the cytoplasm. It is found in the nucleus. The catalysed reaction is diphosphate + H2O = 2 phosphate + H(+). In terms of biological role, phosphatase that hydrolyzes imidodiphosphate, 3-phosphohistidine and 6-phospholysine. Has broad substrate specificity and can also hydrolyze inorganic diphosphate, but with lower efficiency. The sequence is that of Phospholysine phosphohistidine inorganic pyrophosphate phosphatase (lhpp) from Danio rerio (Zebrafish).